The chain runs to 238 residues: MLFALPALNDNYIWLYQRENLPLIIVDLPETDKLFAWLEKQNATIEAVLLTHEHDDHTQGVSAFKKRYPTVPIYGPQECEKKGATQIVNEGKILTANYQIDVIPTGGHTKQHVSFLVDNHLFCGDALFSAGCGRVFTGNYALMFEGLQRLNTLPDETIVCPAHEYTLGNLAFAETVLVDKSAVEKSAVEKQRIFVETQRAENKPSLPTTLKLEREINPFLQAKTLEEFTALRKAKDIF.

7 residues coordinate Zn(2+): His-52, His-54, Asp-56, His-57, His-108, Asp-125, and His-163.

Belongs to the metallo-beta-lactamase superfamily. Glyoxalase II family. In terms of assembly, monomer. The cofactor is Zn(2+).

The enzyme catalyses an S-(2-hydroxyacyl)glutathione + H2O = a 2-hydroxy carboxylate + glutathione + H(+). Its pathway is secondary metabolite metabolism; methylglyoxal degradation; (R)-lactate from methylglyoxal: step 2/2. Functionally, thiolesterase that catalyzes the hydrolysis of S-D-lactoyl-glutathione to form glutathione and D-lactic acid. The sequence is that of Hydroxyacylglutathione hydrolase from Haemophilus influenzae (strain ATCC 51907 / DSM 11121 / KW20 / Rd).